The sequence spans 96 residues: UPF0235 protein YggU (96 aa).

It belongs to the UPF0235 family.

The chain is UPF0235 protein YggU from Escherichia coli O127:H6 (strain E2348/69 / EPEC).